The sequence spans 520 residues: Keratin, type II cytoskeletal 8 (520 aa).

Low complexity predominate over residues 1–19 (MSTYSKKTSYTVKSSSSGS). Positions 1 to 20 (MSTYSKKTSYTVKSSSSGSI) are disordered. A head region spans residues 2–114 (STYSKKTSYT…DPNIQIVRTQ (113 aa)). A Phosphoserine modification is found at Ser28. The tract at residues 115-150 (EKEQIKTLNNRFASFIDKVRFLEQQNKMLETKWSLL) is coil 1A. An IF rod domain is found at 115-426 (EKEQIKTLNN…KLLEGEEDRL (312 aa)). A linker 1 region spans residues 151-166 (QNQTATRSNIDAMFEA). Residues 168 to 259 (IANLRRQLDS…QIFEEEIREL (92 aa)) are coil 1B. Residues 260-283 (QSQIKDTSVVVEMDNSRNLDMDAI) form a linker 12 region. The interval 284 to 422 (VAEVRAQYED…ATYRKLLEGE (139 aa)) is coil 2. The interval 423–520 (EDRLATGIKA…VSESSEVVQD (98 aa)) is tail.

Belongs to the intermediate filament family. In terms of assembly, heterotetramer of two type I and two type II keratins. Keratin-8 associates with keratin-18. Expressed in simple epithelia.

The protein resides in the cytoplasm. It is found in the nucleus. The protein localises to the nucleoplasm. Its subcellular location is the nucleus matrix. Its function is as follows. Together with KRT19, helps to link the contractile apparatus to dystrophin at the costameres of striated muscle. The polypeptide is Keratin, type II cytoskeletal 8 (Danio rerio (Zebrafish)).